A 258-amino-acid polypeptide reads, in one-letter code: Axonemal dynein light intermediate polypeptide 1 (258 aa).

Disordered stretches follow at residues Met-1–Asp-60 and Val-207–Lys-231. Residues Ser-34 to Ala-44 show a composition bias toward low complexity. Residues Met-176–Ala-255 adopt a coiled-coil conformation.

Belongs to the inner dynein arm light chain family. As to quaternary structure, interacts with CFAP45. Interacts with DYNC1H1. As to expression, expressed in many tissues. A smaller 0.9 kb and a larger 2.5 kb transcripts were detected at the highest level in the testis, at medium levels in the prostate, heart, liver, lung and pancreas, at low levels in the ovary, skeletal muscle and small intestine. Not detected in spleen, colon epithelium, thymus or peripheral blood leukocytes. The 0.9 kb transcript is expressed at a 20-fold higher level than the 2.5 kb transcript in the testis. Expressed in spermatozoa and airway epithelial cells (at protein level).

It localises to the cell projection. It is found in the cilium. The protein resides in the flagellum. The protein localises to the dynein axonemal particle. Its subcellular location is the cytoplasm. Its function is as follows. Involved in sperm flagellum assembly. The protein is Axonemal dynein light intermediate polypeptide 1 of Homo sapiens (Human).